The following is a 338-amino-acid chain: DNA-directed RNA polymerase subunit alpha (338 aa).

The alpha N-terminal domain (alpha-NTD) stretch occupies residues 1–226 (MLIAQRPTLT…ELFGLARELN (226 aa)). Residues 243 to 338 (LAADLALPIE…DADYADEQYN (96 aa)) form an alpha C-terminal domain (alpha-CTD) region.

Belongs to the RNA polymerase alpha chain family. Homodimer. The RNAP catalytic core consists of 2 alpha, 1 beta, 1 beta' and 1 omega subunit. When a sigma factor is associated with the core the holoenzyme is formed, which can initiate transcription.

The catalysed reaction is RNA(n) + a ribonucleoside 5'-triphosphate = RNA(n+1) + diphosphate. Functionally, DNA-dependent RNA polymerase catalyzes the transcription of DNA into RNA using the four ribonucleoside triphosphates as substrates. The sequence is that of DNA-directed RNA polymerase subunit alpha from Beutenbergia cavernae (strain ATCC BAA-8 / DSM 12333 / CCUG 43141 / JCM 11478 / NBRC 16432 / NCIMB 13614 / HKI 0122).